The following is a 442-amino-acid chain: C4-dicarboxylate transport protein (442 aa).

8 helical membrane passes run 10–30 (VQVLIAIALGILTGFLFPSLG), 40–60 (FIKLIKMIIAPIIFATVVSGI), 77–97 (LLYFELVTTFALVIGLVIVNI), 144–164 (FTQGDLLQVLLVAVLFGFALL), 183–203 (VIFVILGFVMRLAPIGAFGAM), 221–241 (LMITFYATCALFIFGVLGLIA), 331–351 (LLGVLLLTSKGAAGVTGSGFI), and 354–374 (AATLSAVGDVPVAGLALILGI). The interval 418–442 (LPTIEPDVHSEERGEGRELDSLRPA) is disordered. Basic and acidic residues predominate over residues 423-442 (PDVHSEERGEGRELDSLRPA).

It belongs to the dicarboxylate/amino acid:cation symporter (DAACS) (TC 2.A.23) family.

It is found in the cell membrane. Responsible for the transport of dicarboxylates such as succinate, fumarate, and malate across the membrane. The chain is C4-dicarboxylate transport protein from Deinococcus deserti (strain DSM 17065 / CIP 109153 / LMG 22923 / VCD115).